Consider the following 363-residue polypeptide: Phosphoserine aminotransferase (363 aa).

Residue R46 participates in L-glutamate binding. Residues 80–81 (AT), W106, T156, D176, and Q199 each bind pyridoxal 5'-phosphate. An N6-(pyridoxal phosphate)lysine modification is found at K200. Pyridoxal 5'-phosphate is bound at residue 241–242 (NT).

The protein belongs to the class-V pyridoxal-phosphate-dependent aminotransferase family. SerC subfamily. In terms of assembly, homodimer. Pyridoxal 5'-phosphate serves as cofactor.

The protein localises to the cytoplasm. The catalysed reaction is O-phospho-L-serine + 2-oxoglutarate = 3-phosphooxypyruvate + L-glutamate. It carries out the reaction 4-(phosphooxy)-L-threonine + 2-oxoglutarate = (R)-3-hydroxy-2-oxo-4-phosphooxybutanoate + L-glutamate. It participates in amino-acid biosynthesis; L-serine biosynthesis; L-serine from 3-phospho-D-glycerate: step 2/3. It functions in the pathway cofactor biosynthesis; pyridoxine 5'-phosphate biosynthesis; pyridoxine 5'-phosphate from D-erythrose 4-phosphate: step 3/5. In terms of biological role, catalyzes the reversible conversion of 3-phosphohydroxypyruvate to phosphoserine and of 3-hydroxy-2-oxo-4-phosphonooxybutanoate to phosphohydroxythreonine. This chain is Phosphoserine aminotransferase, found in Leptospira interrogans serogroup Icterohaemorrhagiae serovar copenhageni (strain Fiocruz L1-130).